The chain runs to 95 residues: Large ribosomal subunit protein uL23 (95 aa).

It belongs to the universal ribosomal protein uL23 family. As to quaternary structure, part of the 50S ribosomal subunit. Contacts protein L29, and trigger factor when it is bound to the ribosome.

In terms of biological role, one of the early assembly proteins it binds 23S rRNA. One of the proteins that surrounds the polypeptide exit tunnel on the outside of the ribosome. Forms the main docking site for trigger factor binding to the ribosome. The polypeptide is Large ribosomal subunit protein uL23 (Thermodesulfovibrio yellowstonii (strain ATCC 51303 / DSM 11347 / YP87)).